The sequence spans 361 residues: Beta-hexosaminidase (361 aa).

Substrate-binding positions include Asp-69, Arg-77, Arg-144, and 174–175 (KH). Catalysis depends on His-187, which acts as the Proton donor/acceptor. Asp-258 functions as the Nucleophile in the catalytic mechanism.

This sequence belongs to the glycosyl hydrolase 3 family. NagZ subfamily.

The protein resides in the cytoplasm. The enzyme catalyses Hydrolysis of terminal non-reducing N-acetyl-D-hexosamine residues in N-acetyl-beta-D-hexosaminides.. It participates in cell wall biogenesis; peptidoglycan recycling. In terms of biological role, plays a role in peptidoglycan recycling by cleaving the terminal beta-1,4-linked N-acetylglucosamine (GlcNAc) from peptide-linked peptidoglycan fragments, giving rise to free GlcNAc, anhydro-N-acetylmuramic acid and anhydro-N-acetylmuramic acid-linked peptides. The chain is Beta-hexosaminidase from Neisseria meningitidis serogroup B (strain ATCC BAA-335 / MC58).